The primary structure comprises 432 residues: Polyamine export protein (432 aa).

The CNNM transmembrane domain occupies 1–201 (MIMELFHTIL…AEAGVLKTQE (201 aa)). Helical transmembrane passes span 2–22 (IMEL…SAVV), 61–81 (FITV…GIGE), 100–120 (WIAP…FILF), and 138–158 (LSVV…VWFF). 2 consecutive CBS domains span residues 220–279 (MTTR…NENV) and 286–345 (LLRK…SNEE).

Belongs to the UPF0053 family. PaeA subfamily.

The protein localises to the cell inner membrane. Functionally, involved in cadaverine and putrescine tolerance in stationary phase. May facilitate the efflux of both cadaverine and putrescine from the cytoplasm, reducing potentially toxic levels under certain stress conditions. In Haemophilus influenzae (strain ATCC 51907 / DSM 11121 / KW20 / Rd), this protein is Polyamine export protein.